The sequence spans 295 residues: 4-diphosphocytidyl-2-C-methyl-D-erythritol kinase (295 aa).

The active site involves K15. An ATP-binding site is contributed by 101-111 (PIAAGLGGGSS). The active site involves D143.

The protein belongs to the GHMP kinase family. IspE subfamily.

It catalyses the reaction 4-CDP-2-C-methyl-D-erythritol + ATP = 4-CDP-2-C-methyl-D-erythritol 2-phosphate + ADP + H(+). It functions in the pathway isoprenoid biosynthesis; isopentenyl diphosphate biosynthesis via DXP pathway; isopentenyl diphosphate from 1-deoxy-D-xylulose 5-phosphate: step 3/6. Catalyzes the phosphorylation of the position 2 hydroxy group of 4-diphosphocytidyl-2C-methyl-D-erythritol. The protein is 4-diphosphocytidyl-2-C-methyl-D-erythritol kinase of Caulobacter vibrioides (strain ATCC 19089 / CIP 103742 / CB 15) (Caulobacter crescentus).